Reading from the N-terminus, the 300-residue chain is tRNA dimethylallyltransferase (300 aa).

Residue 9–16 (GTTASGKS) participates in ATP binding. 11–16 (TASGKS) lines the substrate pocket. Residues 34–37 (DSLC) are interaction with substrate tRNA.

This sequence belongs to the IPP transferase family. As to quaternary structure, monomer. Mg(2+) serves as cofactor.

It carries out the reaction adenosine(37) in tRNA + dimethylallyl diphosphate = N(6)-dimethylallyladenosine(37) in tRNA + diphosphate. Functionally, catalyzes the transfer of a dimethylallyl group onto the adenine at position 37 in tRNAs that read codons beginning with uridine, leading to the formation of N6-(dimethylallyl)adenosine (i(6)A). This is tRNA dimethylallyltransferase from Campylobacter fetus subsp. fetus (strain 82-40).